The primary structure comprises 262 residues: DNA repair protein RecO (262 aa).

Belongs to the RecO family.

Involved in DNA repair and RecF pathway recombination. The chain is DNA repair protein RecO from Acidovorax ebreus (strain TPSY) (Diaphorobacter sp. (strain TPSY)).